Consider the following 364-residue polypeptide: UDP-3-O-acylglucosamine N-acyltransferase (364 aa).

Histidine 258 serves as the catalytic Proton acceptor.

The protein belongs to the transferase hexapeptide repeat family. LpxD subfamily. Homotrimer.

The enzyme catalyses a UDP-3-O-[(3R)-3-hydroxyacyl]-alpha-D-glucosamine + a (3R)-hydroxyacyl-[ACP] = a UDP-2-N,3-O-bis[(3R)-3-hydroxyacyl]-alpha-D-glucosamine + holo-[ACP] + H(+). It functions in the pathway bacterial outer membrane biogenesis; LPS lipid A biosynthesis. Catalyzes the N-acylation of UDP-3-O-acylglucosamine using 3-hydroxyacyl-ACP as the acyl donor. Is involved in the biosynthesis of lipid A, a phosphorylated glycolipid that anchors the lipopolysaccharide to the outer membrane of the cell. The chain is UDP-3-O-acylglucosamine N-acyltransferase from Burkholderia orbicola (strain AU 1054).